A 396-amino-acid polypeptide reads, in one-letter code: Purine ribonucleoside efflux pump NepI (396 aa).

The Cytoplasmic segment spans residues M1–A21. Residues V22 to L42 traverse the membrane as a helical segment. At L43–E54 the chain is on the periplasmic side. Residues G55 to I75 traverse the membrane as a helical segment. The Cytoplasmic portion of the chain corresponds to T76 to R85. A helical transmembrane segment spans residues Y86–N106. S107 is a topological domain (periplasmic). Residues F108–I128 traverse the membrane as a helical segment. Residues S129–S147 lie on the Cytoplasmic side of the membrane. Residues V148–G168 traverse the membrane as a helical segment. Over E169–N175 the chain is Periplasmic. A helical transmembrane segment spans residues V176–P196. Topologically, residues S197–R215 are cytoplasmic. The chain crosses the membrane as a helical span at residues P216–F236. Over T237–T255 the chain is Periplasmic. A helical membrane pass occupies residues L256 to L276. Over K277–K281 the chain is Cytoplasmic. A helical membrane pass occupies residues L282–G302. Topologically, residues S303–K305 are periplasmic. The helical transmembrane segment at I306–W326 threads the bilayer. The Cytoplasmic portion of the chain corresponds to S327 to S343. A helical transmembrane segment spans residues I344 to L364. The Periplasmic segment spans residues D365–N366. A helical membrane pass occupies residues I367–V387. Residues T388–S396 lie on the Cytoplasmic side of the membrane.

It belongs to the major facilitator superfamily. DHA1 family. NepI (TC 2.A.1.2.26) subfamily.

It localises to the cell inner membrane. It carries out the reaction inosine(in) + H(+)(out) = inosine(out) + H(+)(in). It catalyses the reaction guanosine(in) + H(+)(out) = guanosine(out) + H(+)(in). Its function is as follows. Involved in the efflux of purine ribonucleosides, such as inosine and guanosine. The protein is Purine ribonucleoside efflux pump NepI of Escherichia coli O6:K15:H31 (strain 536 / UPEC).